Consider the following 330-residue polypeptide: MSTASERVRPVVGTMIGDPAGIGPEVAVRALADGAVHTDSIPVLVGSAAAVERALDFTGTKARLRVMRGFEKPSDDPAIIDVIDTGALPDGVLPLGEDTEAAGHATAQWLDELDALARDGSFAATIMGPISTGSLKLAKKLDRVISPTPGESYLVLLTGPLRVAHLTDHMSLRQVIDVISADLVATAVGQLHEAMQSWGIAQPRIAVAGLNPHAMGDEDRLEIAPGIEAARARGIDVEGPIAPDSVFRHCIEGRYDMVLAMFHDQGHIAVKTWGFSGNSVIIMGPPYLHMSVAHGTAYDIVGTGKADAAMMLSAMRTCGRLASGRGFEQA.

A divalent metal cation is bound by residues H169, H213, and H263.

This sequence belongs to the PdxA family. As to quaternary structure, homodimer. Zn(2+) serves as cofactor. The cofactor is Mg(2+). It depends on Co(2+) as a cofactor.

Its subcellular location is the cytoplasm. It catalyses the reaction 4-(phosphooxy)-L-threonine + NAD(+) = 3-amino-2-oxopropyl phosphate + CO2 + NADH. The protein operates within cofactor biosynthesis; pyridoxine 5'-phosphate biosynthesis; pyridoxine 5'-phosphate from D-erythrose 4-phosphate: step 4/5. Its function is as follows. Catalyzes the NAD(P)-dependent oxidation of 4-(phosphooxy)-L-threonine (HTP) into 2-amino-3-oxo-4-(phosphooxy)butyric acid which spontaneously decarboxylates to form 3-amino-2-oxopropyl phosphate (AHAP). The protein is Putative 4-hydroxythreonine-4-phosphate dehydrogenase of Novosphingobium aromaticivorans (Sphingomonas aromaticivorans).